The following is a 283-amino-acid chain: Movement protein (283 aa).

It belongs to the tenuiviruses pc4 protein family.

Transports viral genome to neighboring plant cells directly through plasmosdesmata, without any budding. The movement protein allows efficient cell to cell propagation, by bypassing the host cell wall barrier. In Maize stripe virus (MStV), this protein is Movement protein.